A 265-amino-acid chain; its full sequence is tRNA pseudouridine synthase A (265 aa).

The active-site Nucleophile is Asp-52. Tyr-112 contacts substrate.

It belongs to the tRNA pseudouridine synthase TruA family. As to quaternary structure, homodimer.

The catalysed reaction is uridine(38/39/40) in tRNA = pseudouridine(38/39/40) in tRNA. Its function is as follows. Formation of pseudouridine at positions 38, 39 and 40 in the anticodon stem and loop of transfer RNAs. The protein is tRNA pseudouridine synthase A of Akkermansia muciniphila (strain ATCC BAA-835 / DSM 22959 / JCM 33894 / BCRC 81048 / CCUG 64013 / CIP 107961 / Muc).